The primary structure comprises 270 residues: Regulatory protein RecX (270 aa).

Belongs to the RecX family.

Its subcellular location is the cytoplasm. In terms of biological role, modulates RecA activity. In Bacillus cereus (strain B4264), this protein is Regulatory protein RecX.